We begin with the raw amino-acid sequence, 217 residues long: Phosphatidylserine decarboxylase proenzyme (217 aa).

The active-site Schiff-base intermediate with substrate; via pyruvic acid is Ser-182. Ser-182 is subject to Pyruvic acid (Ser); by autocatalysis.

Belongs to the phosphatidylserine decarboxylase family. PSD-A subfamily. As to quaternary structure, heterodimer of a large membrane-associated beta subunit and a small pyruvoyl-containing alpha subunit. It depends on pyruvate as a cofactor. Post-translationally, is synthesized initially as an inactive proenzyme. Formation of the active enzyme involves a self-maturation process in which the active site pyruvoyl group is generated from an internal serine residue via an autocatalytic post-translational modification. Two non-identical subunits are generated from the proenzyme in this reaction, and the pyruvate is formed at the N-terminus of the alpha chain, which is derived from the carboxyl end of the proenzyme. The post-translation cleavage follows an unusual pathway, termed non-hydrolytic serinolysis, in which the side chain hydroxyl group of the serine supplies its oxygen atom to form the C-terminus of the beta chain, while the remainder of the serine residue undergoes an oxidative deamination to produce ammonia and the pyruvoyl prosthetic group on the alpha chain.

Its subcellular location is the cell membrane. It carries out the reaction a 1,2-diacyl-sn-glycero-3-phospho-L-serine + H(+) = a 1,2-diacyl-sn-glycero-3-phosphoethanolamine + CO2. The protein operates within phospholipid metabolism; phosphatidylethanolamine biosynthesis; phosphatidylethanolamine from CDP-diacylglycerol: step 2/2. Catalyzes the formation of phosphatidylethanolamine (PtdEtn) from phosphatidylserine (PtdSer). The protein is Phosphatidylserine decarboxylase proenzyme of Nitratidesulfovibrio vulgaris (strain ATCC 29579 / DSM 644 / CCUG 34227 / NCIMB 8303 / VKM B-1760 / Hildenborough) (Desulfovibrio vulgaris).